Here is a 160-residue protein sequence, read N- to C-terminus: Large ribosomal subunit protein eL21B (160 aa).

The interval 114-140 is disordered; the sequence is AKRKEAKAQGKTVQLRRQPAPPATAHF.

This sequence belongs to the eukaryotic ribosomal protein eL21 family. As to quaternary structure, component of the large ribosomal subunit (LSU). Mature yeast ribosomes consist of a small (40S) and a large (60S) subunit. The 40S small subunit contains 1 molecule of ribosomal RNA (18S rRNA) and at least 33 different proteins. The large 60S subunit contains 3 rRNA molecules (25S, 5.8S and 5S rRNA) and at least 46 different proteins.

Its subcellular location is the cytoplasm. Its function is as follows. Component of the ribosome, a large ribonucleoprotein complex responsible for the synthesis of proteins in the cell. The small ribosomal subunit (SSU) binds messenger RNAs (mRNAs) and translates the encoded message by selecting cognate aminoacyl-transfer RNA (tRNA) molecules. The large subunit (LSU) contains the ribosomal catalytic site termed the peptidyl transferase center (PTC), which catalyzes the formation of peptide bonds, thereby polymerizing the amino acids delivered by tRNAs into a polypeptide chain. The nascent polypeptides leave the ribosome through a tunnel in the LSU and interact with protein factors that function in enzymatic processing, targeting, and the membrane insertion of nascent chains at the exit of the ribosomal tunnel. This is Large ribosomal subunit protein eL21B (rpl2102) from Schizosaccharomyces pombe (strain 972 / ATCC 24843) (Fission yeast).